Reading from the N-terminus, the 210-residue chain is Ribosomal RNA large subunit methyltransferase E (210 aa).

Glycine 60, tryptophan 62, aspartate 80, aspartate 96, and aspartate 122 together coordinate S-adenosyl-L-methionine. The active-site Proton acceptor is the lysine 162.

The protein belongs to the class I-like SAM-binding methyltransferase superfamily. RNA methyltransferase RlmE family.

The protein resides in the cytoplasm. The enzyme catalyses uridine(2552) in 23S rRNA + S-adenosyl-L-methionine = 2'-O-methyluridine(2552) in 23S rRNA + S-adenosyl-L-homocysteine + H(+). Specifically methylates the uridine in position 2552 of 23S rRNA at the 2'-O position of the ribose in the fully assembled 50S ribosomal subunit. In Dichelobacter nodosus (strain VCS1703A), this protein is Ribosomal RNA large subunit methyltransferase E.